Consider the following 446-residue polypeptide: Tubulin beta-5 chain (446 aa).

An MREI motif motif is present at residues 1-4 (MREI). GTP is bound by residues Gln11, Glu69, Ser138, Gly142, Thr143, Gly144, Asn204, and Asn226. Glu69 contributes to the Mg(2+) binding site. Glu438 carries the 5-glutamyl polyglutamate modification.

It belongs to the tubulin family. Dimer of alpha and beta chains. A typical microtubule is a hollow water-filled tube with an outer diameter of 25 nm and an inner diameter of 15 nM. Alpha-beta heterodimers associate head-to-tail to form protofilaments running lengthwise along the microtubule wall with the beta-tubulin subunit facing the microtubule plus end conferring a structural polarity. Microtubules usually have 13 protofilaments but different protofilament numbers can be found in some organisms and specialized cells. The cofactor is Mg(2+). Some glutamate residues at the C-terminus are polyglycylated, resulting in polyglycine chains on the gamma-carboxyl group. Glycylation is mainly limited to tubulin incorporated into axonemes (cilia and flagella) whereas glutamylation is prevalent in neuronal cells, centrioles, axonemes, and the mitotic spindle. Both modifications can coexist on the same protein on adjacent residues, and lowering polyglycylation levels increases polyglutamylation, and reciprocally. The precise function of polyglycylation is still unclear. Post-translationally, some glutamate residues at the C-terminus are polyglutamylated, resulting in polyglutamate chains on the gamma-carboxyl group. Polyglutamylation plays a key role in microtubule severing by spastin (SPAST). SPAST preferentially recognizes and acts on microtubules decorated with short polyglutamate tails: severing activity by SPAST increases as the number of glutamates per tubulin rises from one to eight, but decreases beyond this glutamylation threshold.

It localises to the cytoplasm. The protein localises to the cytoskeleton. In terms of biological role, tubulin is the major constituent of microtubules, a cylinder consisting of laterally associated linear protofilaments composed of alpha- and beta-tubulin heterodimers. Microtubules grow by the addition of GTP-tubulin dimers to the microtubule end, where a stabilizing cap forms. Below the cap, tubulin dimers are in GDP-bound state, owing to GTPase activity of alpha-tubulin. The protein is Tubulin beta-5 chain of Gallus gallus (Chicken).